The primary structure comprises 410 residues: Tegument protein VP16 homolog (410 aa).

Residues 388–410 (PPSPSEILPGDPPRPPTCGFLTR) form a disordered region.

The protein belongs to the herpesviridae tegument protein VP16 protein family. In terms of assembly, associates with the VP16-induced complex; binding to host HCFC1 activates VP16 for association with the octamer motif-binding host protein POU2F1, to form a multiprotein-DNA complex responsible for activating transcription of the viral immediate early genes.

It localises to the virion tegument. The protein resides in the host nucleus. Transcriptional activator of immediate-early (IE) gene products (alpha genes). Acts as a key activator of lytic infection by initiating the lytic program through the assembly of the transcriptional regulatory VP16-induced complex composed of VP16 and two cellular factors, HCFC1 and POU2F1. VP16-induced complex represents a regulatory switch: when it is on, it promotes IE-gene expression and thus lytic infection, and when it is off, it limits IE-gene transcription favoring latent infection. Functionally, may play a role in the aggregation of tegument proteins around nucleocapsids during virus morphogenesis. The protein is Tegument protein VP16 homolog of Varicella-zoster virus (strain Dumas) (HHV-3).